The sequence spans 431 residues: Nuclear receptor subfamily 1 group I member 2 (431 aa).

2 consecutive NR C4-type zinc fingers follow at residues 38 to 58 (CRVCGDKANGYHFNVMTCEGC) and 74 to 99 (CPFRKGTCEITRKTRRQCQACRLRKC). A DNA-binding region (nuclear receptor) is located at residues 38–104 (CRVCGDKANG…RLRKCLESGM (67 aa)). The short motif at 63-89 (RRAMKRNVRLRCPFRKGTCEITRKTRR) is the Bipartite nuclear localization signal element. Positions 105–142 (KKEMIMSDAAVEQRRALIKRKKREKIEAPPPGGQGLTE) are hinge. The 288-residue stretch at 143–430 (EQQALIQELM…LMQELFSSTD (288 aa)) folds into the NR LBD domain. Hyperforin-binding positions include serine 244 and 282–285 (ILRF).

Belongs to the nuclear hormone receptor family. NR1 subfamily. In terms of assembly, heterodimer with RXRA. Interacts with NCOA1. Interacts (via domain NR LBD) with CRY1 and CRY2 in a ligand-dependent manner.

The protein localises to the nucleus. Nuclear receptor that binds and is activated by a variety of endogenous and xenobiotic compounds. Transcription factor that activates the transcription of multiple genes involved in the metabolism and secretion of potentially harmful xenobiotics, endogenous compounds and drugs. Response to specific ligands is species-specific, due to differences in the ligand-binding domain. Activated by naturally occurring steroids, such as pregnenolone and progesterone. Binds to a response element in the promoters of the CYP3A4 and ABCB1/MDR1 genes. This is Nuclear receptor subfamily 1 group I member 2 (Nr1i2) from Rattus norvegicus (Rat).